A 425-amino-acid chain; its full sequence is Protein CLP1 homolog (425 aa).

Residues Glu18, Lys59, and 121–126 contribute to the ATP site; that span reads DVGKST.

The protein belongs to the Clp1 family. Clp1 subfamily.

The protein resides in the nucleus. In terms of biological role, required for endonucleolytic cleavage during polyadenylation-dependent pre-mRNA 3'-end formation. The sequence is that of Protein CLP1 homolog (cbc) from Drosophila ananassae (Fruit fly).